Here is a 391-residue protein sequence, read N- to C-terminus: Probable acridone synthase 4 (391 aa).

Cys164 is an active-site residue.

Belongs to the thiolase-like superfamily. Chalcone/stilbene synthases family.

The catalysed reaction is N-methylanthraniloyl-CoA + 3 malonyl-CoA + 3 H(+) = 1,3-dihydroxy-N-methylacridone + 3 CO2 + 4 CoA + H2O. The protein is Probable acridone synthase 4 (ACS4) of Ruta graveolens (Common rue).